A 498-amino-acid polypeptide reads, in one-letter code: Cytochrome P450 71B24 (498 aa).

A helical membrane pass occupies residues 1-21 (MSILLYFIALLSLIIIKKIKD). Residue C442 participates in heme binding.

Belongs to the cytochrome P450 family. The cofactor is heme.

It localises to the membrane. The polypeptide is Cytochrome P450 71B24 (CYP71B24) (Arabidopsis thaliana (Mouse-ear cress)).